The primary structure comprises 130 residues: Small ribosomal subunit protein uS11 (130 aa).

The protein belongs to the universal ribosomal protein uS11 family. Part of the 30S ribosomal subunit. Interacts with proteins S7 and S18. Binds to IF-3.

Located on the platform of the 30S subunit, it bridges several disparate RNA helices of the 16S rRNA. Forms part of the Shine-Dalgarno cleft in the 70S ribosome. This chain is Small ribosomal subunit protein uS11, found in Campylobacter lari (strain RM2100 / D67 / ATCC BAA-1060).